Consider the following 133-residue polypeptide: Peptide methionine sulfoxide reductase MsrB (133 aa).

A compositionally biased stretch (basic and acidic residues) spans 1–12; the sequence is MSEKVQKSEHEW. Residues 1 to 36 are disordered; the sequence is MSEKVQKSEHEWQQQLTPEQYRVTREKGTERPFTGD. Residues 9-132 form the MsrB domain; that stretch reads EHEWQQQLTP…NSVSLDFHPG (124 aa). Zn(2+)-binding residues include C48, C51, C97, and C100. The active-site Nucleophile is C121.

The protein belongs to the MsrB Met sulfoxide reductase family. It depends on Zn(2+) as a cofactor.

The catalysed reaction is L-methionyl-[protein] + [thioredoxin]-disulfide + H2O = L-methionyl-(R)-S-oxide-[protein] + [thioredoxin]-dithiol. The polypeptide is Peptide methionine sulfoxide reductase MsrB (Chromohalobacter salexigens (strain ATCC BAA-138 / DSM 3043 / CIP 106854 / NCIMB 13768 / 1H11)).